Consider the following 226-residue polypeptide: uncharacterized protein (226 aa).

Residues 121–141 traverse the membrane as a helical segment; it reads YLIGNIIGLPLTIPFILIPLI.

The protein to yeast YDL183c.

Its subcellular location is the membrane. This is an uncharacterized protein from Schizosaccharomyces pombe (strain 972 / ATCC 24843) (Fission yeast).